The chain runs to 485 residues: Membrane-bound lytic murein transglycosylase F (485 aa).

The first 29 residues, 1–29, serve as a signal peptide directing secretion; it reads MFAHTALRQRCAKWLFATGLFLLLGACVE. The interval 30 to 267 is non-LT domain; the sequence is KPSTLERVKE…RLKDRYYGHV (238 aa). The interval 268 to 485 is LT domain; the sequence is DVLGYVGAYT…DKPAEQSPPM (218 aa). The active site involves glutamate 314. Residues 465–485 form a disordered region; the sequence is EGNLHVPGVNKDKPAEQSPPM.

The protein in the N-terminal section; belongs to the bacterial solute-binding protein 3 family. This sequence in the C-terminal section; belongs to the transglycosylase Slt family.

Its subcellular location is the cell outer membrane. The catalysed reaction is Exolytic cleavage of the (1-&gt;4)-beta-glycosidic linkage between N-acetylmuramic acid (MurNAc) and N-acetylglucosamine (GlcNAc) residues in peptidoglycan, from either the reducing or the non-reducing ends of the peptidoglycan chains, with concomitant formation of a 1,6-anhydrobond in the MurNAc residue.. In terms of biological role, murein-degrading enzyme that degrades murein glycan strands and insoluble, high-molecular weight murein sacculi, with the concomitant formation of a 1,6-anhydromuramoyl product. Lytic transglycosylases (LTs) play an integral role in the metabolism of the peptidoglycan (PG) sacculus. Their lytic action creates space within the PG sacculus to allow for its expansion as well as for the insertion of various structures such as secretion systems and flagella. This chain is Membrane-bound lytic murein transglycosylase F, found in Pseudomonas putida (strain W619).